A 623-amino-acid polypeptide reads, in one-letter code: Chaperone protein DnaK (623 aa).

Position 175 is a phosphothreonine; by autocatalysis (Thr-175). Residues 580-623 (PEGAQGAGFDPNNMGGANAGNASAENDKKDDNVVDADYKVEDDK) are disordered. Positions 591–603 (NNMGGANAGNASA) are enriched in low complexity. Residues 604 to 623 (ENDKKDDNVVDADYKVEDDK) show a composition bias toward basic and acidic residues.

This sequence belongs to the heat shock protein 70 family.

Its function is as follows. Acts as a chaperone. The chain is Chaperone protein DnaK from Clostridium botulinum (strain Okra / Type B1).